Consider the following 469-residue polypeptide: MTNLTLMNQLTPKQIVEKLDQYIIGQTGAKKSVAVALRNRYRRQLMDESIRDEIIPKNILMIGPTGVGKTEIARRIAKIVRAPFSKVEATKFTEVGYVGRDVESMVRDLVEVSVRLVKEEKMQLVRVKAEKNAEKRLIKLLAPSQKKKQTTSQNPLEALFGGMNQPDESAEEEVDQELKNKRSQIEWRLQNGELDDEIVTVEVKEQQNPMLDMMRGAGMDQMNGMQDALSGMFPAKKKKRKVTVREAKKILFEDEASKLIDADELAAEGIHRAEQMGMIFIDEIDKIASKEGGGNAQVSREGVQRDILPIVEGSQISTKYGTVNTEYILFIAAGAFHMSKPSDLIPELQGRFPIRIELDKLTQEDFYKILTEPDNALIKQYKALLKTEGIDLIFTKEAVERIAEIAFQVNQDSDNIGARRLHTILEKLLEDLLFEAPEINMESIKVTENYVNEKLAPIMQNKDLTQFIL.

ATP is bound by residues isoleucine 24, 66–71 (GVGKTE), aspartate 282, glutamate 347, and arginine 419.

It belongs to the ClpX chaperone family. HslU subfamily. A double ring-shaped homohexamer of HslV is capped on each side by a ring-shaped HslU homohexamer. The assembly of the HslU/HslV complex is dependent on binding of ATP.

The protein localises to the cytoplasm. Functionally, ATPase subunit of a proteasome-like degradation complex; this subunit has chaperone activity. The binding of ATP and its subsequent hydrolysis by HslU are essential for unfolding of protein substrates subsequently hydrolyzed by HslV. HslU recognizes the N-terminal part of its protein substrates and unfolds these before they are guided to HslV for hydrolysis. The polypeptide is ATP-dependent protease ATPase subunit HslU (Listeria monocytogenes serotype 4a (strain HCC23)).